A 427-amino-acid polypeptide reads, in one-letter code: tRNA(Ile)-lysidine synthase (427 aa).

ATP is bound at residue 29-34 (SGGVDS).

It belongs to the tRNA(Ile)-lysidine synthase family.

Its subcellular location is the cytoplasm. It carries out the reaction cytidine(34) in tRNA(Ile2) + L-lysine + ATP = lysidine(34) in tRNA(Ile2) + AMP + diphosphate + H(+). Functionally, ligates lysine onto the cytidine present at position 34 of the AUA codon-specific tRNA(Ile) that contains the anticodon CAU, in an ATP-dependent manner. Cytidine is converted to lysidine, thus changing the amino acid specificity of the tRNA from methionine to isoleucine. This is tRNA(Ile)-lysidine synthase from Thermosipho africanus (strain TCF52B).